The chain runs to 869 residues: NACHT, LRR and PYD domains-containing protein 6 (869 aa).

The Pyrin domain occupies 37–128 (KLRDAPLDGR…REHVLRQHAK (92 aa)). In terms of domain architecture, NACHT spans 194 to 511 (LTVVLQGPAG…EFLAALSYLL (318 aa)). Residue 200–207 (GPAGIGKT) participates in ATP binding. A disordered region spans residues 350–354 (KDKKK). An LRR 1 repeat occupies 460–485 (EEDLEKLKLRGSQVQTIFLNKKEIPG). A disordered region spans residues 577-608 (VQGQSHPKGPPVGAKKTAELEDIEDAEEEEEE). Acidic residues predominate over residues 596 to 608 (LEDIEDAEEEEEE). 2 LRR repeats span residues 635 to 658 (LSSL…VLNY) and 837 to 860 (TLSL…KTSK).

This sequence belongs to the NLRP family. Homomultimer; forms the NLRP6 inflammasome polymeric complex, a filament composed of homopolymers in response to pathogens and other damage-associated signals. The core of NLRP6 inflammasomes consists of a signal sensor component (NLRP6), an adapter (PYCARD/ASC), which recruits effector pro-inflammatory caspases (CASP1 and CASP4). Interacts (via pyrin domain) with PYCARD/ASC (via pyrin domain); interaction takes place following NLRP6 activation and formation of liquid-liquid phase separation (LLPS), initiating nucleation which greatly enhances further addition of soluble PYCARD/ASC molecules to the speck in a prion-like polymerization process. Clustered PYCARD/ASC nucleates the formation of CASP1 (or possibly CASP4) filaments through the interaction of their respective CARD domains, acting as a platform for CASP1 polymerization. CASP1 filament formation increases local enzyme concentration, resulting in trans-autocleavage and activation. Active CASP1 then processes IL1B and IL18 precursors, leading to the release of mature cytokines in the extracellular milieu and inflammatory response. Interacts with DHX15. Polyubiquitinated with 'Lys-63'-linked chains, promoting the interaction with PYCARD/ASC and formation of the NLRP6 inflammasome. Deubiquitination by CYLD decreases the interaction with PYCARD/ASC. In terms of tissue distribution, highly expressed in the gastrointestinal tract, predominantly in colonic myofibroblasts and in colonic epithelial and endothelial cells. Within the intestinal mucosa, highly expressed by goblet cells. Also expressed in hepatocytes and in immune cells, including CD4(+) and CD8(+) T-cells, dendritic cells, mastocytes and peritoneal macrophages, as well as in lung, kidney, bladder and gonads.

The protein resides in the cytoplasm. It is found in the inflammasome. The protein localises to the cell membrane. Its subcellular location is the nucleus membrane. In terms of biological role, acts as the sensor component of the NLRP6 inflammasome, which mediates inflammasome activation in response to various pathogen-associated signals, leading to maturation and secretion of IL1B and IL18. Inflammasomes are supramolecular complexes that assemble in the cytosol in response to pathogens and other damage-associated signals and play critical roles in innate immunity and inflammation. Acts as a recognition receptor (PRR): recognizes and binds specific pathogens and other damage-associated signals, such as lipoteichoic acid (LTA), a cell-wall component of Gram-positive bacteria, or double stranded RNA (dsRNA). May also recognize and bind lipopolysaccharide (LPS), a major component of the outer membrane of Gram-negative bacteria; however, LPS is probably not a major activator of the NLRP6 inflammasome. Following LTA- or dsRNA-binding, NLRP6 undergoes liquid-liquid phase separation (LLPS), enhancing multivalent interactions, an essential step for the formation of the NLRP6 inflammasome polymeric complex. The NLRP6 inflammasome acts by promoting recruitment of effector pro-inflammatory caspases (CASP1 and/or CASP4) that catalyze maturation and secretion of IL1B and IL18 in the extracellular milieu. The NLRP6 inflammasome plays a central role in the maintenance of epithelial integrity and host defense against microbial infections in the intestine. Required to restrict infection against Gram-positive bacteria by recognizing lipoteichoic acid (LTA), leading to recruitment of CASP4 and CASP1, and subsequent maturation and secretion of IL1B and IL18. Involved in intestinal antiviral innate immunity together with DHX15: recognizes and binds viral dsRNA to restrict infection by enteric viruses through the interferon pathway and GSDMD-dependent release of IL18. Required to prevent infection by the apicomplexan parasite C.tyzzeri in enterocytes by promoting GSDMD-dependent release of IL18. The NLRP6 inflammasome may also regulate the gut microbiota composition by acting as a sensor of microbiota-associated metabolites to form a PYCARD/ASC-dependent inflammasome for downstream IL18 release and secretion of antimicrobial peptides. Its role in the regulation of the gut microbiota composition is however subject to discussion. Essential for gut mucosal self-renewal and proliferation. Regulate mucus secretion in an inflammasome- and autophagy-dependent manner to prevent invasion by enteric bacteria. During systemic bacterial infections, the NLRP6 inflammasome negatively regulates neutrophil recruitment and neutrophil extracellular traps (NETs) formation. May promote peripheral nerve recovery following injury via an inflammasome-independent mechanism. This is NACHT, LRR and PYD domains-containing protein 6 from Mus musculus (Mouse).